A 247-amino-acid chain; its full sequence is MAANGEEQQTQAGRHQEVGHKSLLQSDALYQYILETSVYPREPECMKELRELTAKHPWNIMTTSADEGQFLNMLLKLINAKNTMEIGVFTGYSLLATALAIPEDGKILAMDINRENYELGLPVIQKAGLEHKIEFKEGPALPVLDQMIEDGKYHGTYDFIFVDADKDNYINYHKRLIELVKVGGLIGYDNTLWNGSVVAPADAPMRKYVRYYRDFVLELNKALAADPRIEICMLPVGDGITLCRRIK.

Lys-21 serves as a coordination point for substrate. Residues Thr-63, Glu-85, 87 to 88 (GV), Ser-93, Asp-111, and Ala-140 contribute to the S-adenosyl-L-methionine site. Asp-163 lines the substrate pocket. Position 163 (Asp-163) interacts with a divalent metal cation. Asp-165 contributes to the S-adenosyl-L-methionine binding site. A divalent metal cation-binding residues include Asp-189 and Asn-190. A substrate-binding site is contributed by Asn-194.

This sequence belongs to the class I-like SAM-binding methyltransferase superfamily. Cation-dependent O-methyltransferase family. CCoAMT subfamily. A divalent metal cation is required as a cofactor.

The catalysed reaction is (E)-caffeoyl-CoA + S-adenosyl-L-methionine = (E)-feruloyl-CoA + S-adenosyl-L-homocysteine + H(+). The protein operates within aromatic compound metabolism; phenylpropanoid biosynthesis. In terms of biological role, methylates caffeoyl-CoA to feruloyl-CoA and 5-hydroxyferuloyl-CoA to sinapoyl-CoA. Plays a role in the synthesis of feruloylated polysaccharides. Involved in the reinforcement of the plant cell wall. Also involved in the responding to wounding or pathogen challenge by the increased formation of cell wall-bound ferulic acid polymers. This is Caffeoyl-CoA O-methyltransferase 2 (CCOAOMT2) from Populus trichocarpa (Western balsam poplar).